We begin with the raw amino-acid sequence, 630 residues long: Vacuolar protein 8 (630 aa).

Gly2 is lipidated: N-myristoyl glycine. 9 ARM repeats span residues 74 to 115 (EITE…NLAV), 117 to 156 (AENK…NLAT), 158 to 197 (DENK…NMTH), 199 to 238 (DENR…NIAV), 242 to 281 (NRKK…NLAS), 283 to 322 (SKYQ…NVSI), 324 to 364 (PANE…NLAA), 408 to 447 (DDLK…NLSS), and 456 to 495 (FNAV…QLLE). Disordered stretches follow at residues 519–558 (AKSP…EGEG) and 572–630 (EVGE…GRDR). The segment covering 543 to 558 (SEDEFEDGLTDQEGEG) has biased composition (acidic residues). Positions 598 to 607 (GQGQTSQVGS) are enriched in polar residues.

This sequence belongs to the beta-catenin family.

The protein localises to the vacuole membrane. Functions in both vacuole inheritance and protein targeting from the cytoplasm to vacuole. This is Vacuolar protein 8 (VAC8) from Cryptococcus neoformans var. neoformans serotype D (strain B-3501A) (Filobasidiella neoformans).